The chain runs to 485 residues: Apolipoprotein N-acyltransferase (485 aa).

6 consecutive transmembrane segments (helical) span residues 8-28 (IAGAILPLAFAPFNWFPIAFV), 49-69 (GWLFGFGFFGAGASWVYVSIH), 76-96 (VPLAVLITVLFVFVLALFIAF), 121-141 (WWVVWEWLRSILFTGFPWLFL), 157-177 (FGIYGISLIVAFISGCIYLLV), and 186-206 (IMCLILIILPFIVGWVLTFIP). The CN hydrolase domain maps to 220–457 (VQGNIGQRLK…RLLLTGQIKP (238 aa)). Glu259 functions as the Proton acceptor in the catalytic mechanism. The active site involves Lys317. Cys369 acts as the Nucleophile in catalysis. The helical transmembrane segment at 464–484 (LMRWNYYPVVGIIIIFLLLTF) threads the bilayer.

Belongs to the CN hydrolase family. Apolipoprotein N-acyltransferase subfamily.

It is found in the cell inner membrane. The enzyme catalyses N-terminal S-1,2-diacyl-sn-glyceryl-L-cysteinyl-[lipoprotein] + a glycerophospholipid = N-acyl-S-1,2-diacyl-sn-glyceryl-L-cysteinyl-[lipoprotein] + a 2-acyl-sn-glycero-3-phospholipid + H(+). It participates in protein modification; lipoprotein biosynthesis (N-acyl transfer). Functionally, catalyzes the phospholipid dependent N-acylation of the N-terminal cysteine of apolipoprotein, the last step in lipoprotein maturation. This is Apolipoprotein N-acyltransferase from Coxiella burnetii (strain RSA 493 / Nine Mile phase I).